Reading from the N-terminus, the 272-residue chain is WIMGHMVNDLSLVDEFLNDGANSLELDVEFSSSGTAQRTHHGFPCDCFRYCTNSEKFSTYLDYIRQLTTPGNSKFQSRLILLVMDLKLNPLSSSAAYNAGADVALNLLNHYWQRGESEARAYIVLSLSTIGGAEFISGFKSTMEKEGFADKYYDKIGWDFSGNEDLQQIRDVLENYGIREHIWQGDGITNCLPRGDSRLKEALNLRYSPSYIYADKVYTWSIDEENSIKHALWLGVDGVMTNHPERVIEVLGKSKYSDKFRLATYDDNPWEK.

His-5 is a catalytic residue. 2 residues coordinate Mg(2+): Glu-25 and Asp-27. The Nucleophile role is filled by His-41. 2 cysteine pairs are disulfide-bonded: Cys-45–Cys-51 and Cys-47–Cys-191. A Mg(2+)-binding site is contributed by Asp-85.

Belongs to the arthropod phospholipase D family. Class II subfamily. Requires Mg(2+) as cofactor. In terms of tissue distribution, expressed by the venom gland.

The protein resides in the secreted. The catalysed reaction is an N-(acyl)-sphingosylphosphocholine = an N-(acyl)-sphingosyl-1,3-cyclic phosphate + choline. The enzyme catalyses an N-(acyl)-sphingosylphosphoethanolamine = an N-(acyl)-sphingosyl-1,3-cyclic phosphate + ethanolamine. It carries out the reaction a 1-acyl-sn-glycero-3-phosphocholine = a 1-acyl-sn-glycero-2,3-cyclic phosphate + choline. It catalyses the reaction a 1-acyl-sn-glycero-3-phosphoethanolamine = a 1-acyl-sn-glycero-2,3-cyclic phosphate + ethanolamine. Its function is as follows. Dermonecrotic toxins cleave the phosphodiester linkage between the phosphate and headgroup of certain phospholipids (sphingolipid and lysolipid substrates), forming an alcohol (often choline) and a cyclic phosphate. This toxin acts on sphingomyelin (SM). It may also act on ceramide phosphoethanolamine (CPE), lysophosphatidylcholine (LPC) and lysophosphatidylethanolamine (LPE), but not on lysophosphatidylserine (LPS), and lysophosphatidylglycerol (LPG). It acts by transphosphatidylation, releasing exclusively cyclic phosphate products as second products. Induces dermonecrosis, hemolysis, increased vascular permeability, edema, inflammatory response, and platelet aggregation. In Sicarius peruensis (Six-eyed sand spider), this protein is Dermonecrotic toxin SpeSicTox-betaIB1a.